Reading from the N-terminus, the 226-residue chain is Orotidine 5'-phosphate decarboxylase (226 aa).

Substrate contacts are provided by residues Asp-8, Lys-30, 58 to 67 (DLKIHDIPNT), Thr-117, Arg-177, Gln-186, Gly-206, and Arg-207. Lys-60 functions as the Proton donor in the catalytic mechanism.

The protein belongs to the OMP decarboxylase family. Type 1 subfamily. In terms of assembly, homodimer.

It catalyses the reaction orotidine 5'-phosphate + H(+) = UMP + CO2. Its pathway is pyrimidine metabolism; UMP biosynthesis via de novo pathway; UMP from orotate: step 2/2. In terms of biological role, catalyzes the decarboxylation of orotidine 5'-monophosphate (OMP) to uridine 5'-monophosphate (UMP). This chain is Orotidine 5'-phosphate decarboxylase, found in Campylobacter jejuni subsp. jejuni serotype O:6 (strain 81116 / NCTC 11828).